The primary structure comprises 201 residues: RILP-like protein 2 (201 aa).

One can recognise an RH1 domain in the interval 14 to 108 (GPEIALDKDP…LKDGPQMGVG (95 aa)). A coiled-coil region spans residues 67-155 (LEMLEALVNQ…AQDELQCYKS (89 aa)). The 77-residue stretch at 121-197 (RPRFTLQELR…TVKSLFSFKQ (77 aa)) folds into the RH2 domain. The segment at 177-201 (SPRENESKEKSTVKSLFSFKQGKQT) is disordered. Over residues 179–188 (RENESKEKST) the composition is skewed to basic and acidic residues.

This sequence belongs to the RILPL family.

Its subcellular location is the cytoplasm. The protein localises to the cytosol. It is found in the cytoskeleton. It localises to the microtubule organizing center. The protein resides in the centrosome. Its subcellular location is the cell projection. The protein localises to the cilium. Involved in cell shape and neuronal morphogenesis, positively regulating the establishment and maintenance of dendritic spines. Plays a role in cellular protein transport. The chain is RILP-like protein 2 (rilpl2) from Xenopus tropicalis (Western clawed frog).